The primary structure comprises 211 residues: Thiamine-phosphate synthase (211 aa).

4-amino-2-methyl-5-(diphosphooxymethyl)pyrimidine is bound by residues Gln37 to Lys41 and Asn69. Residues Asp70 and Asp89 each coordinate Mg(2+). Residue Ser108 coordinates 4-amino-2-methyl-5-(diphosphooxymethyl)pyrimidine. Thr134–Thr136 lines the 2-[(2R,5Z)-2-carboxy-4-methylthiazol-5(2H)-ylidene]ethyl phosphate pocket. Position 137 (Lys137) interacts with 4-amino-2-methyl-5-(diphosphooxymethyl)pyrimidine. 2-[(2R,5Z)-2-carboxy-4-methylthiazol-5(2H)-ylidene]ethyl phosphate-binding positions include Gly166 and Val186–Ser187.

Belongs to the thiamine-phosphate synthase family. It depends on Mg(2+) as a cofactor.

It catalyses the reaction 2-[(2R,5Z)-2-carboxy-4-methylthiazol-5(2H)-ylidene]ethyl phosphate + 4-amino-2-methyl-5-(diphosphooxymethyl)pyrimidine + 2 H(+) = thiamine phosphate + CO2 + diphosphate. The enzyme catalyses 2-(2-carboxy-4-methylthiazol-5-yl)ethyl phosphate + 4-amino-2-methyl-5-(diphosphooxymethyl)pyrimidine + 2 H(+) = thiamine phosphate + CO2 + diphosphate. It carries out the reaction 4-methyl-5-(2-phosphooxyethyl)-thiazole + 4-amino-2-methyl-5-(diphosphooxymethyl)pyrimidine + H(+) = thiamine phosphate + diphosphate. It functions in the pathway cofactor biosynthesis; thiamine diphosphate biosynthesis; thiamine phosphate from 4-amino-2-methyl-5-diphosphomethylpyrimidine and 4-methyl-5-(2-phosphoethyl)-thiazole: step 1/1. Functionally, condenses 4-methyl-5-(beta-hydroxyethyl)thiazole monophosphate (THZ-P) and 2-methyl-4-amino-5-hydroxymethyl pyrimidine pyrophosphate (HMP-PP) to form thiamine monophosphate (TMP). The sequence is that of Thiamine-phosphate synthase from Salmonella dublin (strain CT_02021853).